We begin with the raw amino-acid sequence, 560 residues long: Cilia- and flagella-associated protein 184 (560 aa).

Over residues 1-12 (MEGGSEHTKDPG) the composition is skewed to basic and acidic residues. The segment at 1 to 209 (MEGGSEHTKD…QEEGKPLGGR (209 aa)) is disordered. 2 stretches are compositionally biased toward acidic residues: residues 41–61 (GELE…EEEA) and 101–110 (EPEEPAEAGA). Basic and acidic residues-rich tracts occupy residues 127–144 (AEAR…KEVR) and 179–209 (ETRR…LGGR). 2 coiled-coil regions span residues 357–481 (QAAL…QGRD) and 510–536 (DSLL…LKRH).

Belongs to the CFAP184 family. As to quaternary structure, forms a complex with CFAP263; the interaction is required for functional activity in cilia.

The protein resides in the cell projection. The protein localises to the cilium. Its subcellular location is the cytoplasm. It localises to the cytoskeleton. It is found in the microtubule organizing center. The protein resides in the centrosome. In complex with CFAP263, acts as a regulator of ciliary beating that connects radial spoke 3 (RS3) to the inner dynein arm (IDA) and the nexin-dynein regulatory complex (N-DRC). The complex is positioned parallel to N-DRC and forms a connection between the arch at the base of RS3, the IDA tail and N-DRC. This is Cilia- and flagella-associated protein 184 (CFAP184) from Macaca fascicularis (Crab-eating macaque).